The sequence spans 33 residues: uncharacterized protein (33 aa).

The chain crosses the membrane as a helical span at residues 11-31 (LALVIYMSVVLLLMVGVPLLF).

Its subcellular location is the membrane. This is an uncharacterized protein from Saccharomyces cerevisiae (strain ATCC 204508 / S288c) (Baker's yeast).